Reading from the N-terminus, the 171-residue chain is MFVVKMVLGFLILLSPLCATGLDISQTDIIERSLNFLLFAGILWYFLAKKLRSFLRSKSLEISKRLEEIQAQLKVSKENKKKLLKELEQAKEKAELIISDANKEAYTITQKYELQTKIDVENLIKNSKALMDLEVKKIKRELVESVFKDLRESKKVSFNAQDCVNILKQRL.

Residues 2-22 (FVVKMVLGFLILLSPLCATGL) form a helical membrane-spanning segment.

It belongs to the ATPase B chain family. In terms of assembly, F-type ATPases have 2 components, F(1) - the catalytic core - and F(0) - the membrane proton channel. F(1) has five subunits: alpha(3), beta(3), gamma(1), delta(1), epsilon(1). F(0) has three main subunits: a(1), b(2) and c(10-14). The alpha and beta chains form an alternating ring which encloses part of the gamma chain. F(1) is attached to F(0) by a central stalk formed by the gamma and epsilon chains, while a peripheral stalk is formed by the delta and b chains.

Its subcellular location is the cell inner membrane. In terms of biological role, f(1)F(0) ATP synthase produces ATP from ADP in the presence of a proton or sodium gradient. F-type ATPases consist of two structural domains, F(1) containing the extramembraneous catalytic core and F(0) containing the membrane proton channel, linked together by a central stalk and a peripheral stalk. During catalysis, ATP synthesis in the catalytic domain of F(1) is coupled via a rotary mechanism of the central stalk subunits to proton translocation. Functionally, component of the F(0) channel, it forms part of the peripheral stalk, linking F(1) to F(0). This Helicobacter pylori (strain G27) protein is ATP synthase subunit b.